We begin with the raw amino-acid sequence, 2033 residues long: MFKGLSKGSQGKGSPKGSPAKGSPKGSPSRHSRAATQELALLISRMQANADQVERDILETQKRLQQDRLNSEQSQALQHQQETGRSLKEAEVLLKDLFLDVDKARRLKHPQAEEIEKDIKQLHERVTQECAEYRALYEKMVLPPDVGPRVDWARVLEQKQKQVCAGQYGPGMAELEQQIAEHNILQKEIDAYGQQLRSLVGPDAATIRSQYRDLLKAASWRGQSLGSLYTHLQGCTRQLSALAEQQRRILQQDWSDLMADPAGVRREYEHFKQHELLSQEQSVNQLEDDGERMVELRHPAVGPIQAHQEALKMEWQNFLNLCICQETQLQHVEDYRRFQEEADSVSQTLAKLNSNLDAKYSPAPGGPPGAPTELLQQLEAEEKRLAVTERATGDLQRRSRDVAPLPQRRNPPQQPLHVDSICDWDSGEVQLLQGERYKLVDNTDPHAWVVQGPGGETKRAPAACFCIPAPDPDAVARASRLASELQALKQKLATVQSRLKASAVESLRPSQQAPSGSDLANPQAQKLLTQMTRLDGDLGQIERQVLAWARAPLSRPTPLEDLEGRIHSHEGTAQRLQSLGTEKETAQKECEAFLSTRPVGPAALQLPVALNSVKNKFSDVQVLCSLYGEKAKAALDLERQIQDADRVIRGFEATLVQEAPIPAEPGALQERVSELQRQRRELLEQQTCVLRLHRALKASEHACAALQNNFQEFCQDLPRQQRQVRALTDRYHAVGDQLDLREKVVQDAALTYQQFKNCKDNLSSWLEHLPRSQVRPSDGPSQIAYKLQAQKRLTQEIQSRERDRATASHLSQALQAALQDYELQADTYRCSLEPTLAVSAPKRPRVAPLQESIQAQEKNLAKAYTEVAAAQQQLLQQLEFARKMLEKKELSEDIRRTHDAKQGSESPAQAGRESEALKAQLEEERKRVARVQHELEAQRSQLLQLRTQRPLERLEEKEVVEFYRDPQLEGSLSRVKAQVEEEGKRRAGLQADLEVAAQKVVQLESKRKTMQPHLLTKEVTQVERDPGLDSQAAQLRIQIQQLRGEDAVISARLEGLKKELLALEKREVDVKEKVVVKEVVKVEKNLEMVKAAQALRLQMEEDAARRKQAEEAVAKLQARIEDLERAISSVEPKVIVKEVKKVEQDPGLLQESSRLRSLLEEERTKNATLARELSDLHSKYSVVEKQRPKVQLQERVHEIFQVDPETEQEITRLKAKLQEMAGKRSGVEKEVEKLLPDLEVLRAQKPTVEYKEVTQEVVRHERSPEVLREIDRLKAQLNELVNSHGRSQEQLIRLQGERDEWRRERAKVETKTVSKEVVRHEKDPVLEKEAERLRQEVREAAQKRRAAEDAVYELQSKRLLLERRKPEEKVVVQEVVVTQKDPKLREEHSRLSGSLDEEVGRRRQLELEVQQLRAGVEEQEGLLSFQEDRSKKLAVERELRQLTLRIQELEKRPPTVQEKIIMEEVVKLEKDPDLEKSTEALRWDLDQEKTQVTELNRECKNLQVQIDVLQKAKSQEKTIYKEVIRVQKDRVLEDERARVWEMLNRERTARQAREEEARRLRERIDRAETLGRTWSREESELQRARDQADQECGRLQQELRALERQKQQQTLQLQEESKLLSQKTESERQKAAQRGQELSRLEAAILREKDQIYEKERTLRDLHAKVSREELSQETQTRETNLSTKISILEPETGKDMSPYEAYKRGIIDRGQYLQLQELECDWEEVTTSGPCGEESVLLDRKSGKQYSIEAALRCRRISKEEYHLYKDGHLPISEFALLVAGETKPSSSLSIGSIISKSPLASPAPQSTSFFSPSFSLGLGDDSFPIAGIYDTTTDNKCSIKTAVAKNMLDPITGQKLLEAQAATGGIVDLLSRERYSVHKAMERGLIENTSTQRLLNAQKAFTGIEDPVTKKRLSVGEAVQKGWMPRESVLPHLQVQHLTGGLIDPKRTGRIPIQQALLSGMISEELAQLLQDESSYEKDLTDPISKERLSYKEAMGRCRKDPLSGLLLLPAALEGYRCYRSASPTVPRSLR.

The segment covering 1 to 27 has biased composition (low complexity); the sequence is MFKGLSKGSQGKGSPKGSPAKGSPKGS. 2 disordered regions span residues 1–37 and 65–85; these read MFKG…AATQ and QQDR…ETGR. A globular 1 region spans residues 1-841; the sequence is MFKGLSKGSQ…LEPTLAVSAP (841 aa). The 4 X 4 AA tandem repeats of K-G-S-P stretch occupies residues 12–28; sequence KGSPKGSPAKGSPKGSP. Residues 71–84 are compositionally biased toward polar residues; the sequence is SEQSQALQHQQETG. Residues 229-330 form a Spectrin repeat; the sequence is YTHLQGCTRQ…LCICQETQLQ (102 aa). Basic and acidic residues predominate over residues 388 to 401; the sequence is TERATGDLQRRSRD. Disordered regions lie at residues 388 to 418 and 891 to 916; these read TERA…PLHV and SEDI…ESEA. In terms of domain architecture, SH3 spans 413–470; the sequence is QQPLHVDSICDWDSGEVQLLQGERYKLVDNTDPHAWVVQGPGGETKRAPAACFCIPAP. Positions 842–1673 are central fibrous rod domain; sequence KRPRVAPLQE…AKVSREELSQ (832 aa). A coiled-coil region spans residues 845–1135; the sequence is RVAPLQESIQ…AISSVEPKVI (291 aa). Residues 891-902 are compositionally biased toward basic and acidic residues; the sequence is SEDIRRTHDAKQ. One copy of the Plectin 1 repeat lies at 1185-1226; sequence KQRPKVQLQERVHEIFQVDPETEQEITRLKAKLQEMAGKRSG. Ser-1575 carries the post-translational modification Phosphoserine. Positions 1614-1623 are enriched in low complexity; the sequence is QEESKLLSQK. The disordered stretch occupies residues 1614 to 1636; the sequence is QEESKLLSQKTESERQKAAQRGQ. A globular 2 region spans residues 1674-2033; it reads ETQTRETNLS…ASPTVPRSLR (360 aa). One copy of the Plectin 2 repeat lies at 1678–1713; the sequence is RETNLSTKISILEPETGKDMSPYEAYKRGIIDRGQY. Ser-1799 is modified (phosphoserine). Plectin repeat units follow at residues 1818-1855, 1856-1893, 1894-1931, 1932-1969, and 1970-2007; these read LGLG…PITG, QKLL…NTST, QRLL…RESV, LPHL…EELA, and QLLQ…PLSG. The residue at position 2025 (Ser-2025) is a Phosphoserine.

It belongs to the plakin or cytolinker family. May form a homodimer or a heterodimer with PPL. As to expression, exclusively expressed in stratified squamous epithelia.

The protein localises to the cell junction. The protein resides in the desmosome. It localises to the cornified envelope. Its subcellular location is the cytoplasm. It is found in the cytoskeleton. Component of the cornified envelope of keratinocytes. May link the cornified envelope to desmosomes and intermediate filaments. This is Envoplakin (EVPL) from Homo sapiens (Human).